We begin with the raw amino-acid sequence, 289 residues long: Oxaloacetate decarboxylase (289 aa).

Substrate is bound at residue S47. D85 lines the Mg(2+) pocket. R156 and H232 together coordinate substrate.

This sequence belongs to the isocitrate lyase/PEP mutase superfamily. Oxaloacetate decarboxylase family. In terms of assembly, homotetramer; dimer of dimers. Requires Mg(2+) as cofactor.

It carries out the reaction oxaloacetate + H(+) = pyruvate + CO2. Functionally, catalyzes the decarboxylation of oxaloacetate into pyruvate. Seems to play a role in maintaining cellular concentrations of bicarbonate and pyruvate. In Rhodopseudomonas palustris (strain BisA53), this protein is Oxaloacetate decarboxylase.